The following is a 330-amino-acid chain: Protein pelota homolog (330 aa).

This sequence belongs to the eukaryotic release factor 1 family. Pelota subfamily. As to quaternary structure, monomer. The cofactor is a divalent metal cation.

It is found in the cytoplasm. Functionally, may function in recognizing stalled ribosomes, interact with stem-loop structures in stalled mRNA molecules, and effect endonucleolytic cleavage of the mRNA. May play a role in the release non-functional ribosomes and degradation of damaged mRNAs. Has endoribonuclease activity. The polypeptide is Protein pelota homolog (Pyrobaculum islandicum (strain DSM 4184 / JCM 9189 / GEO3)).